A 460-amino-acid chain; its full sequence is Elongation factor 1-alpha (460 aa).

G2 is subject to N,N,N-trimethylglycine. An N6,N6-dimethyllysine; alternate modification is found at K3. The residue at position 3 (K3) is an N6-methyllysine; alternate. The tr-type G domain maps to 5–240 (KLHVNVVVIG…DAIEPPVRPS (236 aa)). A G1 region spans residues 14–21 (GHVDSGKS). Position 14-21 (14-21 (GHVDSGKS)) interacts with GTP. Position 30 is an N6-methyllysine (K30). Residues 70-74 (GITID) are G2. An N6,N6,N6-trimethyllysine modification is found at K79. The interval 91 to 94 (DAPG) is G3. Residues 91–95 (DAPGH) and 153–156 (NKMD) contribute to the GTP site. Residues 153–156 (NKMD) are G4. Positions 192–194 (SGW) are G5. K316 carries the post-translational modification N6,N6-dimethyllysine; alternate. K316 is modified (N6-methyllysine; alternate). K390 carries the N6-methyllysine modification.

It belongs to the TRAFAC class translation factor GTPase superfamily. Classic translation factor GTPase family. EF-Tu/EF-1A subfamily.

The protein resides in the cytoplasm. Its function is as follows. This protein promotes the GTP-dependent binding of aminoacyl-tRNA to the A-site of ribosomes during protein biosynthesis. This chain is Elongation factor 1-alpha (TEF1), found in Schizophyllum commune (Split gill fungus).